A 491-amino-acid polypeptide reads, in one-letter code: Cytochrome P450 2K3 (491 aa).

Cys-434 serves as a coordination point for heme.

It belongs to the cytochrome P450 family. The cofactor is heme.

It is found in the endoplasmic reticulum membrane. It localises to the microsome membrane. It carries out the reaction an organic molecule + reduced [NADPH--hemoprotein reductase] + O2 = an alcohol + oxidized [NADPH--hemoprotein reductase] + H2O + H(+). The polypeptide is Cytochrome P450 2K3 (cyp2k3) (Oncorhynchus mykiss (Rainbow trout)).